A 539-amino-acid polypeptide reads, in one-letter code: Fucosyltransferase 2 (539 aa).

The Cytoplasmic portion of the chain corresponds to 1–5; it reads MRITE. Residues 6–26 traverse the membrane as a helical; Signal-anchor for type II membrane protein segment; that stretch reads ILALFMVLVPVSLVIVAMFGY. The Lumenal segment spans residues 27–539; that stretch reads DQGNGFVQAS…SWGLKLVDNF (513 aa). Asparagine 44, asparagine 231, and asparagine 482 each carry an N-linked (GlcNAc...) asparagine glycan.

The protein belongs to the glycosyltransferase 37 family. In terms of tissue distribution, expressed in roots, stems, leaves, flowers, siliques and seedlings.

It is found in the golgi apparatus. It localises to the golgi stack membrane. It participates in protein modification; protein glycosylation. Functionally, may be involved in cell wall biosynthesis. May act as a fucosyltransferase. This Arabidopsis thaliana (Mouse-ear cress) protein is Fucosyltransferase 2 (FUT2).